A 120-amino-acid polypeptide reads, in one-letter code: UPF0102 protein CbuK_0265 (120 aa).

It belongs to the UPF0102 family.

The sequence is that of UPF0102 protein CbuK_0265 from Coxiella burnetii (strain CbuK_Q154) (Coxiella burnetii (strain Q154)).